The following is a 354-amino-acid chain: 5,10-methenyltetrahydromethanopterin hydrogenase (354 aa).

It belongs to the HMD family.

The enzyme catalyses 5,10-methenyl-5,6,7,8-tetrahydromethanopterin + H2 = 5,10-methylenetetrahydromethanopterin + H(+). The protein operates within one-carbon metabolism; methanogenesis from CO(2); 5,10-methylene-5,6,7,8-tetrahydromethanopterin from 5,10-methenyl-5,6,7,8-tetrahydromethanopterin (hydrogen route): step 1/1. In terms of biological role, catalyzes the reversible reduction of methenyl-H(4)MPT(+) to methylene-H(4)MPT. In Methanococcus maripaludis (strain C5 / ATCC BAA-1333), this protein is 5,10-methenyltetrahydromethanopterin hydrogenase.